Reading from the N-terminus, the 513-residue chain is MTELTLKPGNATLADWRAIYRGAVPKLDEACRPKIKASAEAVARIVAKGEPVYGINTGFGKLASVRIPAGDLETLQRNIVLSHAAGVGEPMPVAIARLMMALKLASLAQGASGVRPETIDLLQAMLANDVIPVVPAQGSVGASGDLAPLSHMTAVMIGVGECFTPHGRFPAKVAFVSHGLEPVTLGAKEGLALLNGTQFSTAYALAALFEAEVLYQSALVAGALSTDAAKGSDAPFDPRIHLLRKHRGQIETAEALRNLMAGSAIRESHRVGDERVQDPYCLRCQPQVMGAALDVLRKAADTLGTEANGVTDNPLIFAEDDTALSGGNFHAEPVAFAADMIALAVCEIGSLSERRIAMLVDPALSGMPAFLTPKPGLNSGFMIPQVTAAALVSENKQKAYPASVDSIPTSANQEDHVSMAAHGARRLIGMVENATAVIGIELLAAAQGCDFHQPLASSDALEAVRKLVRAEVPHLDNDRHFHPDMEKAIAMVRSGATVRAAGAVALPSIAGAA.

The 5-imidazolinone (Ala-Gly) cross-link spans 142–144; sequence ASG. Serine 143 is modified (2,3-didehydroalanine (Ser)).

This sequence belongs to the PAL/histidase family. Post-translationally, contains an active site 4-methylidene-imidazol-5-one (MIO), which is formed autocatalytically by cyclization and dehydration of residues Ala-Ser-Gly.

It localises to the cytoplasm. The enzyme catalyses L-histidine = trans-urocanate + NH4(+). Its pathway is amino-acid degradation; L-histidine degradation into L-glutamate; N-formimidoyl-L-glutamate from L-histidine: step 1/3. The protein is Histidine ammonia-lyase of Mesorhizobium japonicum (strain LMG 29417 / CECT 9101 / MAFF 303099) (Mesorhizobium loti (strain MAFF 303099)).